Reading from the N-terminus, the 253-residue chain is Large ribosomal subunit protein mL57 (253 aa).

The N-terminal 28 residues, 1-28 (MENSMMFISRSLRRPVTALNCNLQSVRT), are a transit peptide targeting the mitochondrion.

This sequence belongs to the ribonuclease III family. Mitochondrion-specific ribosomal protein mL57 subfamily. In terms of assembly, component of the mitochondrial large ribosomal subunit (mt-LSU). Mature yeast 74S mitochondrial ribosomes consist of a small (37S) and a large (54S) subunit. The 37S small subunit contains a 15S ribosomal RNA (15S mt-rRNA) and 34 different proteins. The 54S large subunit contains a 21S rRNA (21S mt-rRNA) and 46 different proteins. mL57 forms a heterodimer with mL44 and stabilizes rRNA expansion segments 1/2 at a membrane-facing protuberance close to the point of attachment of the ribosome to the translocon in the membrane.

It is found in the mitochondrion. In terms of biological role, component of the mitochondrial ribosome (mitoribosome), a dedicated translation machinery responsible for the synthesis of mitochondrial genome-encoded proteins, including at least some of the essential transmembrane subunits of the mitochondrial respiratory chain. The mitoribosomes are attached to the mitochondrial inner membrane and translation products are cotranslationally integrated into the membrane. The chain is Large ribosomal subunit protein mL57 (MRPL15) from Saccharomyces cerevisiae (strain ATCC 204508 / S288c) (Baker's yeast).